The sequence spans 1853 residues: DNA-directed RNA polymerase II subunit RPB1 (1853 aa).

Residues Cys66, Cys69, Cys76, His79, Cys106, Cys109, Cys149, and Cys177 each contribute to the Zn(2+) site. A lid loop region spans residues 256–268 (PAVVTFGSAKNQD). Positions 314 to 331 (NCIPGLPTATQKGGRPLK) are rudder loop. Mg(2+) is bound by residues Asp489, Asp491, and Asp493. The bridging helix stretch occupies residues 827–839 (PSEFFFHAMGGRE). A Glycyl lysine isopeptide (Lys-Gly) (interchain with G-Cter in ubiquitin) cross-link involves residue Lys1260. Disordered regions lie at residues 1520-1568 (PWSP…PRTP) and 1589-1853 (SPHY…DPQN). 2 stretches are compositionally biased toward low complexity: residues 1589 to 1811 (SPHY…TPSP) and 1821 to 1853 (YSPS…DPQN). Repeat copies occupy residues 1592–1598 (YSPTSPS), 1599–1605 (YSPTSPA), 1616–1622 (YSPTSPS), 1623–1629 (YSPTSPS), 1630–1636 (YSPTSPS), 1637–1643 (YSPTSPS), 1644–1650 (YSPTSPS), 1651–1657 (YSPTSPS), 1658–1664 (YSPTSPS), 1665–1671 (YSPTSPS), 1679–1685 (YSPTSPT), 1686–1692 (YSPTSPT), 1693–1699 (YSPTSPT), 1700–1706 (YSPTSPT), 1707–1713 (YSPTSPS), 1717–1723 (YSPSSPK), 1724–1730 (YSPSSPT), 1731–1737 (YSPTSPS), 1752–1758 (YSPSSPT), 1759–1765 (YTPSSPT), 1779–1785 (YSPTSPT), 1786–1792 (YSPTSPS), 1800–1806 (YSPTSPT), 1821–1827 (YSPSSPT), 1828–1834 (YSPSSPT), and 1842–1848 (YSPSSPT). Residues 1592-1848 (YSPTSPSYSP…SPSYSPSSPT (257 aa)) form a C-terminal domain (CTD); 26 X 7 AA approximate tandem repeats of Y-[ST]-P-[ST]-S-P-[AGKNQRST] region.

It belongs to the RNA polymerase beta' chain family. In terms of assembly, component of the RNA polymerase II (Pol II) complex consisting of 12 subunits. Interacts with sig-7. In terms of processing, the tandem 7 residues repeats in the C-terminal domain (CTD) can be highly phosphorylated. The phosphorylation activates Pol II. Phosphorylation occurs mainly at residues 'Ser-2' and 'Ser-5' of the heptapeptide repeat and starts at the 3- to 4-cell embryonic stage. This phosphorylation also occurs in the early stages of oocyte development and is not detected in oocytes arrested at the meiotic diakinesis stage. In the somatic lineage, phosphorylation at 'Ser-2' is mediated by cdk-12 downstream of cdk-9 whereas in the germline lineage cdk-12 phosphorylates 'Ser-2' independently of cdk-9. Phosphorylation is likely mediated by cdk-7. May be dephosphorylated by fcp-1 in diakinetic oocytes and in 1-cell and 2-cell embryos. Dephosphorylated at 'Ser-5' of the heptapeptide repeat by ssup-72. The phosphorylation state is believed to result from the balanced action of site-specific CTD kinases and phosphatase, and a 'CTD code' that specifies the position of Pol II within the transcription cycle has been proposed. Post-translationally, following transcription stress, the elongating form of RNA polymerase II (RNA pol IIo) is polyubiquitinated via 'Lys-63'-linkages on Lys-1260 at DNA damage sites without leading to degradation: ubiquitination promotes RNA pol IIo backtracking to allow access by the transcription-coupled nucleotide excision repair (TC-NER) machinery. Subsequent DEF1-dependent polyubiquitination by the elongin complex via 'Lys-48'-linkages may lead to proteasome-mediated degradation; presumably at stalled RNA pol II where TC-NER has failed, to halt global transcription and enable 'last resort' DNA repair pathways.

The protein localises to the nucleus. It localises to the chromosome. The catalysed reaction is RNA(n) + a ribonucleoside 5'-triphosphate = RNA(n+1) + diphosphate. DNA-dependent RNA polymerase catalyzes the transcription of DNA into RNA using the four ribonucleoside triphosphates as substrates. Largest and catalytic component of RNA polymerase II which synthesizes mRNA precursors and many functional non-coding RNAs. Forms the polymerase active center together with the second largest subunit. Pol II is the central component of the basal RNA polymerase II transcription machinery. It is composed of mobile elements that move relative to each other. RPB1 is part of the core element with the central large cleft, the clamp element that moves to open and close the cleft and the jaws that are thought to grab the incoming DNA template. At the start of transcription, a single-stranded DNA template strand of the promoter is positioned within the central active site cleft of Pol II. A bridging helix emanates from RPB1 and crosses the cleft near the catalytic site and is thought to promote translocation of Pol II by acting as a ratchet that moves the RNA-DNA hybrid through the active site by switching from straight to bent conformations at each step of nucleotide addition. During transcription elongation, Pol II moves on the template as the transcript elongates. Elongation is influenced by the phosphorylation status of the C-terminal domain (CTD) of Pol II largest subunit (RPB1), which serves as a platform for assembly of factors that regulate transcription initiation, elongation, termination and mRNA processing. Involved in the transcription of several genes including those involved in embryogenesis. The polypeptide is DNA-directed RNA polymerase II subunit RPB1 (Caenorhabditis briggsae).